The sequence spans 281 residues: Microtubule-associated protein RP/EB family member 3 (281 aa).

One can recognise a Calponin-homology (CH) domain in the interval 14–116 (NLSRHDMLAW…FIQWFKKFFD (103 aa)). 2 disordered regions span residues 157 to 181 (VPQR…VAPP) and 260 to 281 (EGFA…QDEY). Over residues 158-175 (PQRTSPTGPKNMQTSGRL) the composition is skewed to polar residues. S162 and S176 each carry phosphoserine. In terms of domain architecture, EB1 C-terminal spans 194 to 264 (GGHEADAQIL…LYATEEGFAP (71 aa)). The interval 217–260 (DGLEKERDFYFSKLRDIELICQEHESENSPVISGIIGILYATEE) is APC-binding. The interval 217–281 (DGLEKERDFY…EHQQEDQDEY (65 aa)) is DCTN1-binding. Residues 272-281 (EHQQEDQDEY) show a composition bias toward basic and acidic residues.

This sequence belongs to the MAPRE family. Homodimer. Heterodimer with MAPRE1. Binds monomeric and polymerized GTP-bound tubulin. Interacts with DCTN1 and SRCIN1. Binds to the C-terminal domain of APC. Interacts (via C-terminus) with CLIP1. Interacts with SLAIN2. Interacts with SLAIN1. Interacts with APC2. Interacts with AKAP9. Interacts with PDE4DIP isoform 2/MMG8/SMYLE; this interaction is required for its recruitment to the Golgi apparatus.

The protein localises to the cytoplasm. It localises to the cytoskeleton. Its function is as follows. Plus-end tracking protein (+TIP) that binds to the plus-end of microtubules and regulates the dynamics of the microtubule cytoskeleton. Promotes microtubule growth. May be involved in spindle function by stabilizing microtubules and anchoring them at centrosomes. Also acts as a regulator of minus-end microtubule organization: interacts with the complex formed by AKAP9 and PDE4DIP, leading to recruit CAMSAP2 to the Golgi apparatus, thereby tethering non-centrosomal minus-end microtubules to the Golgi, an important step for polarized cell movement. Promotes elongation of CAMSAP2-decorated microtubule stretches on the minus-end of microtubules. This chain is Microtubule-associated protein RP/EB family member 3 (Mapre3), found in Mus musculus (Mouse).